Reading from the N-terminus, the 225-residue chain is Ribonuclease T (225 aa).

The interval 1-21 is disordered; it reads MSEDHFDDEHEGHGGGGGSRH. One can recognise an Exonuclease domain in the interval 33-207; the sequence is VVVDVETGGF…YDTEKTAELF (175 aa). Mg(2+) contacts are provided by Asp36, Glu38, His194, and Asp199. Residue His194 is the Proton donor/acceptor of the active site.

Belongs to the RNase T family. In terms of assembly, homodimer. It depends on Mg(2+) as a cofactor.

Functionally, trims short 3' overhangs of a variety of RNA species, leaving a one or two nucleotide 3' overhang. Responsible for the end-turnover of tRNA: specifically removes the terminal AMP residue from uncharged tRNA (tRNA-C-C-A). Also appears to be involved in tRNA biosynthesis. This Pseudomonas savastanoi pv. phaseolicola (strain 1448A / Race 6) (Pseudomonas syringae pv. phaseolicola (strain 1448A / Race 6)) protein is Ribonuclease T.